The chain runs to 103 residues: Large ribosomal subunit protein uL24 (103 aa).

This sequence belongs to the universal ribosomal protein uL24 family. As to quaternary structure, part of the 50S ribosomal subunit.

Functionally, one of two assembly initiator proteins, it binds directly to the 5'-end of the 23S rRNA, where it nucleates assembly of the 50S subunit. In terms of biological role, one of the proteins that surrounds the polypeptide exit tunnel on the outside of the subunit. This is Large ribosomal subunit protein uL24 from Geobacillus sp. (strain WCH70).